Reading from the N-terminus, the 567-residue chain is Geranylgeranyl transferase type-2 subunit alpha (567 aa).

PFTA repeat units follow at residues 44–78, 88–122, 124–158, 159–193, 207–241, and 363–397; these read LDES…QLET, LVKA…RLPE, NWTR…QAAV, PPAE…QLHP, VLLK…RADP, and VLQS…ALDP. Phosphoserine is present on S98. LRR repeat units lie at residues 442-463, 464-486, 487-508, 509-530, and 534-555; these read EVRV…EQLL, LVTH…AALR, CLEV…TNLP, RLQE…QPLA, and RLVL…LEQL.

It belongs to the protein prenyltransferase subunit alpha family. Heterotrimer composed of RABGGTA, RABGGTB and CHM; within this trimer, RABGGTA and RABGGTB form the catalytic component B, while CHM (component A) mediates peptide substrate binding. The Rab GGTase dimer (RGGT) interacts with CHM (component A) prior to Rab protein binding; the association is stabilized by geranylgeranyl pyrophosphate (GGpp). The CHM:RGGT:Rab complex is destabilized by GGpp. Interacts with non-phosphorylated form of RAB8A; phosphorylation of RAB8A at 'Thr-72' disrupts this interaction.

It carries out the reaction geranylgeranyl diphosphate + L-cysteinyl-[protein] = S-geranylgeranyl-L-cysteinyl-[protein] + diphosphate. The enzymatic reaction requires the aid of a Rab escort protein (also called component A), such as CHM. Its function is as follows. Catalyzes the transfer of a geranylgeranyl moiety from geranylgeranyl diphosphate to both cysteines of Rab proteins with the C-terminal sequence -XXCC, -XCXC and -CCXX, such as RAB1A, RAB3A, RAB5A and RAB7A. This is Geranylgeranyl transferase type-2 subunit alpha (RABGGTA) from Pongo abelii (Sumatran orangutan).